The chain runs to 1179 residues: Protein turtle homolog A (1179 aa).

The first 20 residues, 1-20 (MIWCLRLTILSLILSQGADG), serve as a signal peptide directing secretion. The Extracellular segment spans residues 21–734 (RRKPEVVSVV…TQLPGLLPQP (714 aa)). Ig-like domains are found at residues 24 to 124 (PEVV…DFAN), 136 to 216 (PQFQ…GSVT), 226 to 318 (PPVI…AYLT), 322 to 410 (PAQV…SPVT), and 418 to 498 (PAFI…VTIS). Intrachain disulfides connect Cys-41/Cys-108, Cys-158/Cys-206, Cys-248/Cys-301, Cys-344/Cys-395, and Cys-440/Cys-486. Asn-188 carries an N-linked (GlcNAc...) asparagine glycan. Fibronectin type-III domains lie at 507 to 611 (SPHV…TTPA) and 623 to 718 (PLSP…TSGL). N-linked (GlcNAc...) asparagine glycosylation is found at Asn-513 and Asn-524. A helical membrane pass occupies residues 735–755 (VLAGVVGGVCFLGVAVLVSIL). Over 756–1179 (AACLMNRRRA…ISYPEQATLL (424 aa)) the chain is Cytoplasmic. The interval 766–807 (ARRHRKRLRQDPPLIFSPRGRSGPHSAPGSDSPDSVTKFKLQ) is disordered. Residue Ser-809 is modified to Phosphoserine. Disordered regions lie at residues 819 to 846 (LWGEPARPPSPHPDSPLGRGPLPLEPIC), 869 to 895 (ERSEPRTSAKRLAQSLDCSSSSPSGVP), 942 to 979 (PPLEEPTPASPPDFMGSHPCPTSSFLPPPDSPPTNLRA), and 1016 to 1079 (APRG…KRRN). The segment covering 884–893 (LDCSSSSPSG) has biased composition (polar residues). The span at 1020-1029 (SLTSQSSGRG) shows a compositional bias: polar residues. The PDZ-binding motif lies at 1177–1179 (TLL).

The protein belongs to the immunoglobulin superfamily. Turtle family. In terms of assembly, interacts with SHANK1 and probably with MAGI2. Expressed in hippocampal neurons (at protein level).

It localises to the cell membrane. The protein localises to the synapse. In terms of biological role, functions in dendrite outgrowth and synapse maturation. The chain is Protein turtle homolog A (Igsf9) from Rattus norvegicus (Rat).